A 166-amino-acid polypeptide reads, in one-letter code: Ribosome maturation factor RimM (166 aa).

A PRC barrel domain is found at 94-165; sequence EGEYYLGKLI…TIELKVLDLL (72 aa).

Belongs to the RimM family. As to quaternary structure, binds ribosomal protein uS19.

It localises to the cytoplasm. Functionally, an accessory protein needed during the final step in the assembly of 30S ribosomal subunit, possibly for assembly of the head region. Essential for efficient processing of 16S rRNA. May be needed both before and after RbfA during the maturation of 16S rRNA. It has affinity for free ribosomal 30S subunits but not for 70S ribosomes. The chain is Ribosome maturation factor RimM from Borrelia garinii subsp. bavariensis (strain ATCC BAA-2496 / DSM 23469 / PBi) (Borreliella bavariensis).